A 139-amino-acid polypeptide reads, in one-letter code: Transcription antitermination protein NusB (139 aa).

It belongs to the NusB family.

Functionally, involved in transcription antitermination. Required for transcription of ribosomal RNA (rRNA) genes. Binds specifically to the boxA antiterminator sequence of the ribosomal RNA (rrn) operons. This is Transcription antitermination protein NusB from Baumannia cicadellinicola subsp. Homalodisca coagulata.